A 336-amino-acid polypeptide reads, in one-letter code: 2-phospho-L-lactate transferase (336 aa).

Aspartate 49 lines the 7,8-didemethyl-8-hydroxy-5-deazariboflavin pocket.

This sequence belongs to the CofD family. Homodimer. It depends on Mg(2+) as a cofactor.

It catalyses the reaction (2S)-lactyl-2-diphospho-5'-guanosine + 7,8-didemethyl-8-hydroxy-5-deazariboflavin = oxidized coenzyme F420-0 + GMP + H(+). The protein operates within cofactor biosynthesis; coenzyme F420 biosynthesis. In terms of biological role, catalyzes the transfer of the 2-phospholactate moiety from (2S)-lactyl-2-diphospho-5'-guanosine to 7,8-didemethyl-8-hydroxy-5-deazariboflavin (FO) with the formation of oxidized coenzyme F420-0 and GMP. The polypeptide is 2-phospho-L-lactate transferase (Halobacterium salinarum (strain ATCC 700922 / JCM 11081 / NRC-1) (Halobacterium halobium)).